We begin with the raw amino-acid sequence, 140 residues long: Protein NrdI (140 aa).

This sequence belongs to the NrdI family.

Probably involved in ribonucleotide reductase function. The chain is Protein NrdI from Ruegeria sp. (strain TM1040) (Silicibacter sp.).